Reading from the N-terminus, the 253-residue chain is CD151 antigen (253 aa).

The Cytoplasmic portion of the chain corresponds to 1–18; sequence MGEFNEKKTTCGTVCLKY. S-palmitoyl cysteine attachment occurs at residues Cys-11 and Cys-15. Residues 19 to 39 traverse the membrane as a helical segment; the sequence is LLFTYNCCFWLAGLAVMAVGI. Residues 40–57 are Extracellular-facing; it reads WTLALKSDYISLLASGTY. A helical transmembrane segment spans residues 58 to 78; that stretch reads LATAYILVVAGTVVMVTGVLG. Residues 79–91 lie on the Cytoplasmic side of the membrane; it reads CCATFKERRNLLR. The chain crosses the membrane as a helical span at residues 92–112; it reads LYFILLLIIFLLEIIAGILAY. Topologically, residues 113-221 are extracellular; it reads AYYQQLNTEL…LETFIQEHLR (109 aa). Asn-159 is a glycosylation site (N-linked (GlcNAc...) asparagine). A helical membrane pass occupies residues 222–242; sequence VIGAVGIGIACVQVFGMIFTC. Residues Cys-242 and Cys-243 are each lipidated (S-palmitoyl cysteine). Residues 243–253 lie on the Cytoplasmic side of the membrane; it reads CLYRSLKLEHY.

Belongs to the tetraspanin (TM4SF) family. Interacts with integrins ITGA3:ITGB1, ITGA5:ITGB1, ITGA3:ITGB1 and ITGA6:ITGB4 and with CD9 and CD181. Interacts (via the second extracellular domain) with integrin ITGAV:ITGB3. Interacts with ITGA3; this interaction modulates ITGA3 glycosylation pattern. Interacts with F11R. Interacts with RAC1 and CDC42; these interactions mediate physical association of RAC1 and CDC42 with integrin adhesion receptor complexes. Palmitoylated. Palmitoylation by ZDHHC2 regulates CD151 expression, association with other tetraspanin family proteins and function in cell adhesion. Post-translationally, ubiquitinated by RNF128 on lysine residues present in the tetraspanin amino terminus via 'Lys-48'-linked ubiquitin leading to proteasomal degradation. Expressed in a variety of tissues including vascular endothelium and epidermis. Expressed on erythroid cells, with a higher level of expression in erythroid precursors than on mature erythrocytes. Acts as a sensitive T-cell activation marker.

It localises to the cell membrane. In terms of biological role, structural component of specialized membrane microdomains known as tetraspanin-enriched microdomains (TERMs), which act as platforms for receptor clustering and signaling. Plays a role in various cellular and molecular mechanism through its association with both integrin and non-integrin proteins. These interactions facilitate critical cellular functions, including cell-to-cell communication, wound healing, platelet aggregation, trafficking, cell motility, and angiogenesis. Via interaction with JAM-A/F11R and integrin ITGA3:ITGB1, promotes the recruitment of signaling molecules such as RAC1, CDC42 and RhoGTPases to facilitate the polarization of epithelial cells and the reorganization of the actin cytoskeleton, which are critical steps in cell migration process. Regulates the glycosylation pattern of ITGA3:ITGB1 thereby modulating its activity. Plays an essential role in the maintenance of central laminin-binding integrin ITGA6:ITGB4-containing adhesion complexes. Essential for the proper assembly of the glomerular and tubular basement membranes in kidney. Contributes to T-cell activation by modulating integrin signaling leading to activation of downstream targets PTK2 and MAPK1/MAPK3. Functionally, (Microbial infection) Plays a role in human papillomavirus 16/HPV-16 endocytosis upon binding to cell surface receptor. Its function is as follows. (Microbial infection) Plays a role in human cytomegalovirus entry into host cell by contributing to entry receptor binding, membrane fusion, or release of the capsid. The sequence is that of CD151 antigen (CD151) from Homo sapiens (Human).